We begin with the raw amino-acid sequence, 65 residues long: Small ribosomal subunit protein eS27 (65 aa).

Residues Cys-20, Cys-23, Cys-39, and Cys-42 each contribute to the Zn(2+) site. The segment at 20–42 adopts a C4-type zinc-finger fold; the sequence is CIDCGNEQIVFSHPATRVRCNVC.

Belongs to the eukaryotic ribosomal protein eS27 family. In terms of assembly, part of the 30S ribosomal subunit. It depends on Zn(2+) as a cofactor.

In Pyrococcus abyssi (strain GE5 / Orsay), this protein is Small ribosomal subunit protein eS27.